Consider the following 413-residue polypeptide: MTMLRVRSRDGLERVSVDGPHITVSQLKTLIQDQLQIPIHNQTLSTNRNLLLAKSPSDFLAFTDMADPNLRISSLNLAHGSMVYLAYEGERTIRGGPAVTPAGSFGRKMTVEDLIARQMRVGRQEKAHCDSVSFDRDCANAFQHFVNESLAFAVKRGGFMYGNVSEDGQVEVNFIYEPPQQGMEDNLILMRDSEEEKRVDAIALGLGMRRVGFIFNQTVTQDKKEYTLSNVEVLLAAQLHAESELKEWVTAVVKLEINEDGGADVHFEPFQMSDMCVRLFKEGWFETEIGPEDDPKLSKLKKEVVVGVKDVKEVDNDFFLVLVKILDHQGPLSCTFPIENRNTQTTMRALKTHMERARSLPFVKRISDFHLLLFVAQFLDVSSDVPALAECVRLQSHVPEGYELLIDSMANTS.

Residue serine 104 is modified to Phosphoserine. The region spanning 131–272 (SVSFDRDCAN…ADVHFEPFQM (142 aa)) is the MPN domain.

This sequence belongs to the NPL4 family.

It participates in protein degradation; proteasomal ubiquitin-dependent pathway. May be part of a complex that binds ubiquitinated proteins and that is necessary for the export of misfolded proteins from the ER to the cytoplasm, where they are degraded by the proteasome. The sequence is that of NPL4-like protein 1 from Arabidopsis thaliana (Mouse-ear cress).